The following is a 295-amino-acid chain: Guided entry of tail-anchored proteins factor CAMLG (295 aa).

2 disordered regions span residues 1 to 73 (MEPM…ILNP) and 127 to 148 (GVELRQRNRGDLTADSAPRGSH). The Cytoplasmic segment spans residues 1–188 (MEPMPSATDG…RTTEEFDSFR (188 aa)). Positions 15-24 (ATPSGLSASQ) are enriched in polar residues. S53 carries the phosphoserine modification. The span at 127 to 138 (GVELRQRNRGDL) shows a compositional bias: basic and acidic residues. The chain crosses the membrane as a helical span at residues 189 to 206 (IFRLVGCALLALVVRAFV). Topologically, residues 207 to 208 (CK) are lumenal. C207 and C283 are oxidised to a cystine. The chain crosses the membrane as a helical span at residues 209–227 (YLSIFAPFLTLQLAYMGLY). Topologically, residues 228–268 (KYFPKGEKKVKTTVLTAALLLSGIPAEVINRSMDTYSKMGE) are cytoplasmic. The chain crosses the membrane as a helical span at residues 269–287 (VFTDLCVYFFTFIFCHEVL). At 288–295 (EYWGPEVP) the chain is on the lumenal side.

Component of the Golgi to ER traffic (GET) complex, which is composed of GET1/WRB, CAMLG/GET2 and GET3/TRC40. Within the complex, GET1 and CAMLG form a heterotetramer which is stabilized by phosphatidylinositol binding and which binds to the GET3 homodimer. Interacts (via C-terminus) with GET1. Interacts (via N-terminus) with GET3. GET3 shows a higher affinity for CAMLG than for GET1. Interacts (via N-terminus) with TNFRSF13B/TACI (via C-terminus). As to expression, in the central nervous system, expressed in astrocytes, microglia and neurons (at protein level).

The protein resides in the endoplasmic reticulum membrane. In terms of biological role, required for the post-translational delivery of tail-anchored (TA) proteins to the endoplasmic reticulum. Together with GET1/WRB, acts as a membrane receptor for soluble GET3/TRC40, which recognizes and selectively binds the transmembrane domain of TA proteins in the cytosol. Required for the stability of GET1. Stimulates calcium signaling in T cells through its involvement in elevation of intracellular calcium. Essential for the survival of peripheral follicular B cells. This Rattus norvegicus (Rat) protein is Guided entry of tail-anchored proteins factor CAMLG.